Consider the following 1267-residue polypeptide: Probable ATP-dependent RNA helicase DHR1 (1267 aa).

Disordered stretches follow at residues 1-67, 168-233, and 255-313; these read MGTY…EPLT, YEPK…SNIK, and EELK…DQND. Basic and acidic residues-rich tracts occupy residues 7 to 25 and 32 to 43; these read RFNE…ELKR and TRQDENDERVEN. The segment covering 175–192 has biased composition (acidic residues); sequence EYGEGGSSEDDDGEDDFE. S181 is modified (phosphoserine). Positions 202–217 are enriched in basic and acidic residues; sequence TDNEEKKSSGFIDHRP. The segment covering 264 to 284 has biased composition (acidic residues); sequence DEMDFDTTSEDDDEEEDQEEE. The 180-residue stretch at 401-580 folds into the Helicase ATP-binding domain; that stretch reads MEAIHHNDVV…KTLFPIAPPV (180 aa). 414–421 contacts ATP; sequence GETGSGKT. Residues 516–519 carry the DEAH box motif; it reads DEAH. Residues 675-858 enclose the Helicase C-terminal domain; the sequence is DIDFSVQVID…SIVLQMKSMA (184 aa). Disordered regions lie at residues 693–720 and 955–976; these read RYEE…EVLT and PNPD…PGMD. Acidic residues predominate over residues 695–719; that stretch reads EEDEGNSGNGEDEEDEEEEGFEEVL.

Belongs to the DEAD box helicase family. DEAH subfamily. Interacts with snoRNA U3. Component of the ribosomal small subunit (SSU) processome composed of at least 40 protein subunits and snoRNA U3.

The protein resides in the nucleus. Its subcellular location is the nucleolus. It catalyses the reaction ATP + H2O = ADP + phosphate + H(+). In terms of biological role, probable ATP-binding RNA helicase. Required for 18S rRNA synthesis. May play a role in restructuring of the pre-rRNA. This chain is Probable ATP-dependent RNA helicase DHR1 (ECM16), found in Saccharomyces cerevisiae (strain ATCC 204508 / S288c) (Baker's yeast).